The chain runs to 461 residues: D-phenylhydantoinase (461 aa).

A divalent metal cation contacts are provided by histidine 59, histidine 61, and lysine 151. At lysine 151 the chain carries N6-carboxylysine. Substrate is bound at residue tyrosine 156. Positions 182 and 239 each coordinate a divalent metal cation. Serine 286 contributes to the substrate binding site. Aspartate 313 contributes to the a divalent metal cation binding site. Asparagine 335 is a substrate binding site.

This sequence belongs to the metallo-dependent hydrolases superfamily. Hydantoinase/dihydropyrimidinase family. As to quaternary structure, homotetramer. The cofactor is a divalent metal cation. Post-translationally, carboxylation allows a single lysine to coordinate two divalent metal cations.

It carries out the reaction D-5-phenylhydantoin + H2O = N-carbamoyl-D-phenylglycine + H(+). Its function is as follows. Catalyzes the stereospecific hydrolysis of the cyclic amide bond of D-hydantoin derivatives with an aromatic side chains at the 5'-position. Has no activity on dihydropyrimidines. The physiological function is unknown. This Escherichia coli O6:K15:H31 (strain 536 / UPEC) protein is D-phenylhydantoinase.